A 398-amino-acid polypeptide reads, in one-letter code: Aldo-keto reductase ausK (398 aa).

Residue Asp-76 coordinates NADP(+). The active-site Proton donor is the Tyr-81. Residue His-156 participates in substrate binding. NADP(+) is bound by residues 186–187 (CN), Gln-212, 241–251 (DALGSGKFQSR), and 317–325 (RKIQHLHDN).

This sequence belongs to the aldo/keto reductase family. Aldo/keto reductase 2 subfamily. As to quaternary structure, homodimer.

The protein operates within secondary metabolite biosynthesis; terpenoid biosynthesis. Aldo-keto reductase; part of the gene cluster B that mediates the biosynthesis of austinol and dehydroaustinol, two fungal meroterpenoids. The first step of the pathway is the synthesis of 3,5-dimethylorsellinic acid by the polyketide synthase ausA. 3,5-dimethylorsellinic acid is then prenylated by the polyprenyl transferase ausN. Further epoxidation by the FAD-dependent monooxygenase ausM and cyclization by the probable terpene cyclase ausL lead to the formation of protoaustinoid A. Protoaustinoid A is then oxidized to spiro-lactone preaustinoid A3 by the combined action of the FAD-binding monooxygenases ausB and ausC, and the dioxygenase ausE. Acid-catalyzed keto-rearrangement and ring contraction of the tetraketide portion of preaustinoid A3 by ausJ lead to the formation of preaustinoid A4. The aldo-keto reductase ausK, with the help of ausH, is involved in the next step by transforming preaustinoid A4 into isoaustinone which is in turn hydroxylated by the P450 monooxygenase ausI to form austinolide. Finally, the cytochrome P450 monooxygenase ausG modifies austinolide to austinol. Austinol can be further modified to dehydroaustinol which forms a diffusible complex with diorcinol that initiates conidiation. Due to genetic rearrangements of the clusters and the subsequent loss of some enzymes, the end products of the Emericella nidulans austinoid biosynthesis clusters are austinol and dehydroaustinol, even if additional enzymes, such as the O-acetyltransferase ausQ and the cytochrome P450 monooxygenase ausR are still functional. The protein is Aldo-keto reductase ausK of Emericella nidulans (strain FGSC A4 / ATCC 38163 / CBS 112.46 / NRRL 194 / M139) (Aspergillus nidulans).